The primary structure comprises 218 residues: Tegument protein UL51 homolog (218 aa).

Residue C11 is the site of S-palmitoyl cysteine; by host attachment. The disordered stretch occupies residues 199–218; sequence APPPVVRQPEHSGPTELALT.

This sequence belongs to the herpesviridae UL51 family. As to quaternary structure, homodimer. Interacts with BBRF2; the BBRF2-BSRF1 complexes oligomerize which might play a role in tethering the viral nucleocapsids to the host Golgi membrane during secondary envelopment. Interacts with BGLF3.5. Interacts with BALF1. Interacts with glycoprotein gB. Interacts with glycoprotein heterodimer gH/gL. Post-translationally, phosphorylated. Palmitoylation is necessary for Golgi localization.

Its subcellular location is the host cytoplasm. The protein localises to the virion. It is found in the host Golgi apparatus. Its function is as follows. Plays several roles during the time course of infection, including egress of virus particles from the perinuclear space and secondary envelopment of cytoplasmic capsids that bud into specific trans-Golgi network (TGN)-derived membranes. The chain is Tegument protein UL51 homolog from Homo sapiens (Human).